A 204-amino-acid polypeptide reads, in one-letter code: ATP phosphoribosyltransferase (204 aa).

Belongs to the ATP phosphoribosyltransferase family. Short subfamily. In terms of assembly, heteromultimer composed of HisG and HisZ subunits.

The protein localises to the cytoplasm. The enzyme catalyses 1-(5-phospho-beta-D-ribosyl)-ATP + diphosphate = 5-phospho-alpha-D-ribose 1-diphosphate + ATP. It functions in the pathway amino-acid biosynthesis; L-histidine biosynthesis; L-histidine from 5-phospho-alpha-D-ribose 1-diphosphate: step 1/9. Functionally, catalyzes the condensation of ATP and 5-phosphoribose 1-diphosphate to form N'-(5'-phosphoribosyl)-ATP (PR-ATP). Has a crucial role in the pathway because the rate of histidine biosynthesis seems to be controlled primarily by regulation of HisG enzymatic activity. This chain is ATP phosphoribosyltransferase, found in Staphylococcus epidermidis (strain ATCC 35984 / DSM 28319 / BCRC 17069 / CCUG 31568 / BM 3577 / RP62A).